Reading from the N-terminus, the 362-residue chain is tRNA-specific 2-thiouridylase MnmA (362 aa).

Residues 13-20 (GLSGGVDS) and M39 contribute to the ATP site. The tract at residues 99–101 (NPD) is interaction with target base in tRNA. The Nucleophile role is filled by C104. C104 and C200 form a disulfide bridge. G128 lines the ATP pocket. Positions 150 to 152 (KDQ) are interaction with tRNA. C200 serves as the catalytic Cysteine persulfide intermediate.

The protein belongs to the MnmA/TRMU family.

Its subcellular location is the cytoplasm. It catalyses the reaction S-sulfanyl-L-cysteinyl-[protein] + uridine(34) in tRNA + AH2 + ATP = 2-thiouridine(34) in tRNA + L-cysteinyl-[protein] + A + AMP + diphosphate + H(+). Catalyzes the 2-thiolation of uridine at the wobble position (U34) of tRNA, leading to the formation of s(2)U34. The sequence is that of tRNA-specific 2-thiouridylase MnmA from Coxiella burnetii (strain RSA 493 / Nine Mile phase I).